Consider the following 313-residue polypeptide: MENRSLVTIAEHSKEKILYMLEMAKQFEMNPNRRLLQGKVVATLFFEPSTRTRLSFETAANRLGARVIGFTDPKATSSSKGETLKDTIMMVSSYADIIVMRHYLEGAARYASEVAPVPIVNAGDGANQHPSQTMLDLYSIYKTQGTLENLNIFLVGDLKYGRTVHSLLMAMRHFNPTFHFIAPDELKMPEEYKLYCKEHQIKYIEHTEFTEEIIADADILYMTRVQRERFTDLMEYERVKNVYILRNKMLENTRPNLRILHPLPRVNEIAYDVDNNPKAYYFQQAQNGLYAREAILCDVLGITLEDVKNDILL.

Carbamoyl phosphate is bound by residues arginine 51 and threonine 52. Lysine 80 contacts L-aspartate. 3 residues coordinate carbamoyl phosphate: arginine 101, histidine 129, and glutamine 132. L-aspartate is bound by residues arginine 162 and arginine 224. Carbamoyl phosphate is bound by residues leucine 263 and proline 264.

This sequence belongs to the aspartate/ornithine carbamoyltransferase superfamily. ATCase family. Heterododecamer (2C3:3R2) of six catalytic PyrB chains organized as two trimers (C3), and six regulatory PyrI chains organized as three dimers (R2).

It carries out the reaction carbamoyl phosphate + L-aspartate = N-carbamoyl-L-aspartate + phosphate + H(+). It functions in the pathway pyrimidine metabolism; UMP biosynthesis via de novo pathway; (S)-dihydroorotate from bicarbonate: step 2/3. In terms of biological role, catalyzes the condensation of carbamoyl phosphate and aspartate to form carbamoyl aspartate and inorganic phosphate, the committed step in the de novo pyrimidine nucleotide biosynthesis pathway. In Bacteroides thetaiotaomicron (strain ATCC 29148 / DSM 2079 / JCM 5827 / CCUG 10774 / NCTC 10582 / VPI-5482 / E50), this protein is Aspartate carbamoyltransferase catalytic subunit.